The sequence spans 197 residues: Imidazoleglycerol-phosphate dehydratase (197 aa).

It belongs to the imidazoleglycerol-phosphate dehydratase family.

Its subcellular location is the cytoplasm. The enzyme catalyses D-erythro-1-(imidazol-4-yl)glycerol 3-phosphate = 3-(imidazol-4-yl)-2-oxopropyl phosphate + H2O. It participates in amino-acid biosynthesis; L-histidine biosynthesis; L-histidine from 5-phospho-alpha-D-ribose 1-diphosphate: step 6/9. This is Imidazoleglycerol-phosphate dehydratase from Methylococcus capsulatus (strain ATCC 33009 / NCIMB 11132 / Bath).